The following is a 357-amino-acid chain: DENN domain-containing protein 10 (357 aa).

Positions 1–136 (MAAVVAMDTQ…IAVLTKGICQ (136 aa)) constitute a uDENN domain. Residues 152–299 (KAYLAGSIKD…PEKSDSQVIQ (148 aa)) form the cDENN domain. One can recognise a dDENN domain in the interval 301–357 (IALKTKEIFTHLAPFSEVSDDGGKVILNVEALKQQRFPPATENFLYHLAAAEQMLKV).

The protein belongs to the DENND10 family. Interacts with the coiled-coil heterodimer of CCDC22 and CCDC93; the interaction is direct. Interacts with RAB27A and RAB27B (GDP-bound forms preferentially).

The protein localises to the late endosome. Functionally, guanine nucleotide exchange factor (GEF) regulating homeostasis of late endocytic pathway, including endosomal positioning, maturation and secretion, possibly through activating Rab proteins such as RAB27A and RAB27B. Promotes the exchange of GDP to GTP, converting inactive GDP-bound RAB27A and RAB27B into their active GTP-bound form. In Mus musculus (Mouse), this protein is DENN domain-containing protein 10.